A 242-amino-acid chain; its full sequence is MNTEKPSVAHNVDHNEIAKFEAVASRWWDLEGEFKPLHRINPLRLGYITERSGGLFGKKVLDVGCGGGILAESMAREGATVTGLDMGFEPLQVAKLHALESGIEVEYMQETVEEHAAKHAQQYDVVTCMEMLEHVPDPQSVVHACAQLVKPGGEVFFSTLNRNGKSWLMAVVGAEYILRMVPKGTHDVKKFIKPAELLSWVDETVLKEQHITGLHYNPITNTFKLGPGVDVNYMLHTRAKKA.

Positions 44, 64, 85, and 129 each coordinate S-adenosyl-L-methionine.

Belongs to the methyltransferase superfamily. UbiG/COQ3 family.

It catalyses the reaction a 3-demethylubiquinol + S-adenosyl-L-methionine = a ubiquinol + S-adenosyl-L-homocysteine + H(+). The catalysed reaction is a 3-(all-trans-polyprenyl)benzene-1,2-diol + S-adenosyl-L-methionine = a 2-methoxy-6-(all-trans-polyprenyl)phenol + S-adenosyl-L-homocysteine + H(+). Its pathway is cofactor biosynthesis; ubiquinone biosynthesis. Its function is as follows. O-methyltransferase that catalyzes the 2 O-methylation steps in the ubiquinone biosynthetic pathway. This Salmonella choleraesuis (strain SC-B67) protein is Ubiquinone biosynthesis O-methyltransferase.